Consider the following 355-residue polypeptide: Elongation factor Ts (355 aa).

An involved in Mg(2+) ion dislocation from EF-Tu region spans residues 82–85 (TDFV).

This sequence belongs to the EF-Ts family.

The protein resides in the cytoplasm. Functionally, associates with the EF-Tu.GDP complex and induces the exchange of GDP to GTP. It remains bound to the aminoacyl-tRNA.EF-Tu.GTP complex up to the GTP hydrolysis stage on the ribosome. The polypeptide is Elongation factor Ts (Helicobacter acinonychis (strain Sheeba)).